The following is a 184-amino-acid chain: Protein GrpE (184 aa).

Positions 1–32 (MEEQKQTPSTPTPDTAAEAAVNAATAAPETAG) are disordered. A compositionally biased stretch (low complexity) spans 12–32 (TPDTAAEAAVNAATAAPETAG).

This sequence belongs to the GrpE family. Homodimer.

It is found in the cytoplasm. Functionally, participates actively in the response to hyperosmotic and heat shock by preventing the aggregation of stress-denatured proteins, in association with DnaK and GrpE. It is the nucleotide exchange factor for DnaK and may function as a thermosensor. Unfolded proteins bind initially to DnaJ; upon interaction with the DnaJ-bound protein, DnaK hydrolyzes its bound ATP, resulting in the formation of a stable complex. GrpE releases ADP from DnaK; ATP binding to DnaK triggers the release of the substrate protein, thus completing the reaction cycle. Several rounds of ATP-dependent interactions between DnaJ, DnaK and GrpE are required for fully efficient folding. This chain is Protein GrpE, found in Cupriavidus pinatubonensis (strain JMP 134 / LMG 1197) (Cupriavidus necator (strain JMP 134)).